Reading from the N-terminus, the 563-residue chain is MSKIIRSSDESRGALENGVNSLADAVKVTIGPKGRNVVLEKKFGAPDIVNDGVTIARDIELENPFENLGAKLIEQVASKTKDKAGDGTTTATVLAQVMVHEGLKNTAAGASPIEIRRGMEKAVSHIVDKLQQQSKKISGDKVLQVATVSSGGDEEIGAMVAEAMDKVSVDGVITVEESKSLNTELEITEGMAFDRGYSSPYFVTDAERQICEFENPLLLITDRKISSIADLVPVLETVQKSSSPLVILAEEVDGEALATLVVNKNRGVLQVASVRAPSFGERRKAALADIAVLTKGTLISEDKAMTLDKVSLADLGKARKITITKESTTIVANDDTKKEVASRVASIKRELDQTDSDYDKEKLNERIAKLAGGVAVIKVGAPTETELKNRKLRIEDALNATRAAVEEGIVAGGGSTLIKLGEELDSLSKSLDGDQATGVDIIKKALSAPAKQIALNAGENGDVVVSEIQRLGKGFNAATGQYEDLISAGIIDAVKVIRLALQDAVSIASLLITTEVIIADKPEPPSPAGGEGGGDPMGGMGGMGGMGGMGMPGMGGMGMPGMM.

ATP-binding positions include 29–32 (TIGP), 86–90 (DGTTT), glycine 413, 476–478 (NAA), and aspartate 492. The segment at 520 to 545 (DKPEPPSPAGGEGGGDPMGGMGGMGG) is disordered. Residues 529 to 545 (GGEGGGDPMGGMGGMGG) are compositionally biased toward gly residues.

This sequence belongs to the chaperonin (HSP60) family. As to quaternary structure, forms a cylinder of 14 subunits composed of two heptameric rings stacked back-to-back. Interacts with the co-chaperonin GroES.

Its subcellular location is the cytoplasm. It carries out the reaction ATP + H2O + a folded polypeptide = ADP + phosphate + an unfolded polypeptide.. Together with its co-chaperonin GroES, plays an essential role in assisting protein folding. The GroEL-GroES system forms a nano-cage that allows encapsulation of the non-native substrate proteins and provides a physical environment optimized to promote and accelerate protein folding. The polypeptide is Chaperonin GroEL 1 (Prochlorococcus marinus (strain SARG / CCMP1375 / SS120)).